The chain runs to 501 residues: Ribose import ATP-binding protein RbsA (501 aa).

ABC transporter domains are found at residues 6-242 (LQLS…VGRK) and 253-495 (VHGQ…VGKK). 38 to 45 (GENGAGKS) is a binding site for ATP.

The protein belongs to the ABC transporter superfamily. Ribose importer (TC 3.A.1.2.1) family. The complex is composed of an ATP-binding protein (RbsA), two transmembrane proteins (RbsC) and a solute-binding protein (RbsB).

It localises to the cell inner membrane. The enzyme catalyses D-ribose(out) + ATP + H2O = D-ribose(in) + ADP + phosphate + H(+). Functionally, part of the ABC transporter complex RbsABC involved in ribose import. Responsible for energy coupling to the transport system. The sequence is that of Ribose import ATP-binding protein RbsA from Vibrio vulnificus (strain YJ016).